The chain runs to 202 residues: Outer-membrane lipoprotein carrier protein (202 aa).

Residues 1-18 (MNKLFLILLLIFSHEVFS) form the signal peptide.

It belongs to the LolA family. As to quaternary structure, monomer.

It localises to the periplasm. Functionally, participates in the translocation of lipoproteins from the inner membrane to the outer membrane. Only forms a complex with a lipoprotein if the residue after the N-terminal Cys is not an aspartate (The Asp acts as a targeting signal to indicate that the lipoprotein should stay in the inner membrane). The protein is Outer-membrane lipoprotein carrier protein of Legionella pneumophila (strain Paris).